We begin with the raw amino-acid sequence, 80 residues long: Large ribosomal subunit protein uL24 (80 aa).

This sequence belongs to the universal ribosomal protein uL24 family. Part of the 50S ribosomal subunit.

Functionally, one of two assembly initiator proteins, it binds directly to the 5'-end of the 23S rRNA, where it nucleates assembly of the 50S subunit. Its function is as follows. One of the proteins that surrounds the polypeptide exit tunnel on the outside of the subunit. The polypeptide is Large ribosomal subunit protein uL24 (Chlorobium phaeobacteroides (strain BS1)).